The following is a 468-amino-acid chain: PTS system mannitol-specific EIICB component (468 aa).

Residues 1-25 lie on the Cytoplasmic side of the membrane; that stretch reads MNNQPSFRARVQKFGSFLSGMIMPN. The 331-residue stretch at 14 to 344 folds into the PTS EIIC type-2 domain; sequence FGSFLSGMIM…ILKTSKATAE (331 aa). A helical transmembrane segment spans residues 26–47; it reads IGAFIAWGLITALFIPTGWWPN. Over 48–51 the chain is Extracellular; the sequence is EQLA. The chain crosses the membrane as a helical span at residues 52–72; the sequence is ELVGPMITYLLPLLIGYTGGK. Residues 73-135 are Cytoplasmic-facing; that stretch reads MIYDVRGGVV…SGFEMLVNNF (63 aa). Residues 136-157 traverse the membrane as a helical segment; sequence SAGILAAILAIVAFLGIGPVVV. The Extracellular portion of the chain corresponds to 158–166; sequence SFSNVLASG. Residues 167–187 form a helical membrane-spanning segment; the sequence is VEVIIGAGLLPLASIFIEPAK. The Cytoplasmic portion of the chain corresponds to 188 to 274; it reads VLFLNNAINH…ILMKPTLILA (87 aa). Residues 275 to 294 form a helical membrane-spanning segment; the sequence is VIAGGMSGVFTFVLFNAGLV. Residues 295-314 are Extracellular-facing; it reads AVPSPGSIFALLAMTPRGEY. A helical membrane pass occupies residues 315–336; sequence AGVLAGVIIATVVSFVIASIIL. At 337–468 the chain is on the cytoplasmic side; the sequence is KTSKATAEDL…YDELVNRLKS (132 aa). In terms of domain architecture, PTS EIIB type-2 spans 380–468; it reads NKIIFACDAG…YDELVNRLKS (89 aa). Cysteine 386 serves as the catalytic Phosphocysteine intermediate; for EIIB activity. Cysteine 386 is modified (phosphocysteine; by EIIA).

Homodimer.

It localises to the cell membrane. It carries out the reaction D-mannitol(out) + N(pros)-phospho-L-histidyl-[protein] = D-mannitol 1-phosphate(in) + L-histidyl-[protein]. In terms of biological role, the phosphoenolpyruvate-dependent sugar phosphotransferase system (sugar PTS), a major carbohydrate active transport system, catalyzes the phosphorylation of incoming sugar substrates concomitantly with their translocation across the cell membrane. The enzyme II CmtAB PTS system is involved in D-mannitol transport. This is PTS system mannitol-specific EIICB component (mtlA) from Halalkalibacterium halodurans (strain ATCC BAA-125 / DSM 18197 / FERM 7344 / JCM 9153 / C-125) (Bacillus halodurans).